The primary structure comprises 288 residues: UDP-3-O-acyl-N-acetylglucosamine deacetylase (288 aa).

The Zn(2+) site is built by His-79, His-236, and Asp-240. The Proton donor role is filled by His-263.

Belongs to the LpxC family. The cofactor is Zn(2+).

It catalyses the reaction a UDP-3-O-[(3R)-3-hydroxyacyl]-N-acetyl-alpha-D-glucosamine + H2O = a UDP-3-O-[(3R)-3-hydroxyacyl]-alpha-D-glucosamine + acetate. The protein operates within glycolipid biosynthesis; lipid IV(A) biosynthesis; lipid IV(A) from (3R)-3-hydroxytetradecanoyl-[acyl-carrier-protein] and UDP-N-acetyl-alpha-D-glucosamine: step 2/6. In terms of biological role, catalyzes the hydrolysis of UDP-3-O-myristoyl-N-acetylglucosamine to form UDP-3-O-myristoylglucosamine and acetate, the committed step in lipid A biosynthesis. In Rickettsia prowazekii (strain Madrid E), this protein is UDP-3-O-acyl-N-acetylglucosamine deacetylase.